The primary structure comprises 341 residues: Glycerol-3-phosphate dehydrogenase [NAD(P)+] (341 aa).

NADPH contacts are provided by Ser-14, Phe-15, Arg-35, and Lys-108. 2 residues coordinate sn-glycerol 3-phosphate: Lys-108 and Gly-136. Ala-140 is a binding site for NADPH. Lys-191, Asp-244, Ser-254, Arg-255, and Asn-256 together coordinate sn-glycerol 3-phosphate. Lys-191 serves as the catalytic Proton acceptor. Residue Arg-255 participates in NADPH binding. Residues Val-279 and Glu-281 each contribute to the NADPH site.

This sequence belongs to the NAD-dependent glycerol-3-phosphate dehydrogenase family.

Its subcellular location is the cytoplasm. The enzyme catalyses sn-glycerol 3-phosphate + NAD(+) = dihydroxyacetone phosphate + NADH + H(+). It catalyses the reaction sn-glycerol 3-phosphate + NADP(+) = dihydroxyacetone phosphate + NADPH + H(+). Its pathway is membrane lipid metabolism; glycerophospholipid metabolism. Its function is as follows. Catalyzes the reduction of the glycolytic intermediate dihydroxyacetone phosphate (DHAP) to sn-glycerol 3-phosphate (G3P), the key precursor for phospholipid synthesis. The polypeptide is Glycerol-3-phosphate dehydrogenase [NAD(P)+] (Pseudomonas putida (strain ATCC 47054 / DSM 6125 / CFBP 8728 / NCIMB 11950 / KT2440)).